Here is a 198-residue protein sequence, read N- to C-terminus: MYAVLTAIIAYLIGCINNAYIFTKYTRNIDIRNYGSGNAGATNVLRVLGYKAAAPVFALDVLKGVIAVLIGKYLMGNTGAMIAGIAVVCGHNWPVFLKFRGGKGIATSVGVVMTVSPLLGLIALAIGVTVIVLTKYVSLGSITGSVTFVLLNAIFWNSTQIFIFSLILASLAIFQHRSNIKRLLAGTESKLGQKTEIK.

The next 5 membrane-spanning stretches (helical) occupy residues 2–22 (YAVL…AYIF), 48–70 (LGYK…AVLI), 75–97 (MGNT…PVFL), 111–131 (VVMT…VTVI), and 154–174 (IFWN…LAIF).

This sequence belongs to the PlsY family. As to quaternary structure, probably interacts with PlsX.

It localises to the cell membrane. The catalysed reaction is an acyl phosphate + sn-glycerol 3-phosphate = a 1-acyl-sn-glycero-3-phosphate + phosphate. The protein operates within lipid metabolism; phospholipid metabolism. Functionally, catalyzes the transfer of an acyl group from acyl-phosphate (acyl-PO(4)) to glycerol-3-phosphate (G3P) to form lysophosphatidic acid (LPA). This enzyme utilizes acyl-phosphate as fatty acyl donor, but not acyl-CoA or acyl-ACP. This is Glycerol-3-phosphate acyltransferase from Thermoanaerobacter sp. (strain X514).